The chain runs to 173 residues: Crossover junction endodeoxyribonuclease RuvC (173 aa).

Residues D8, E67, and D139 contribute to the active site. 3 residues coordinate Mg(2+): D8, E67, and D139.

The protein belongs to the RuvC family. Homodimer which binds Holliday junction (HJ) DNA. The HJ becomes 2-fold symmetrical on binding to RuvC with unstacked arms; it has a different conformation from HJ DNA in complex with RuvA. In the full resolvosome a probable DNA-RuvA(4)-RuvB(12)-RuvC(2) complex forms which resolves the HJ. Mg(2+) is required as a cofactor.

The protein resides in the cytoplasm. It carries out the reaction Endonucleolytic cleavage at a junction such as a reciprocal single-stranded crossover between two homologous DNA duplexes (Holliday junction).. Functionally, the RuvA-RuvB-RuvC complex processes Holliday junction (HJ) DNA during genetic recombination and DNA repair. Endonuclease that resolves HJ intermediates. Cleaves cruciform DNA by making single-stranded nicks across the HJ at symmetrical positions within the homologous arms, yielding a 5'-phosphate and a 3'-hydroxyl group; requires a central core of homology in the junction. The consensus cleavage sequence is 5'-(A/T)TT(C/G)-3'. Cleavage occurs on the 3'-side of the TT dinucleotide at the point of strand exchange. HJ branch migration catalyzed by RuvA-RuvB allows RuvC to scan DNA until it finds its consensus sequence, where it cleaves and resolves the cruciform DNA. In Shewanella putrefaciens (strain CN-32 / ATCC BAA-453), this protein is Crossover junction endodeoxyribonuclease RuvC.